The following is a 354-amino-acid chain: Anthranilate phosphoribosyltransferase (354 aa).

Residues G94, 97 to 98 (GD), T102, 104 to 107 (NIST), 122 to 130 (KHGNRAASS), and S134 each bind 5-phospho-alpha-D-ribose 1-diphosphate. Residue G94 participates in anthranilate binding. Residue S106 participates in Mg(2+) binding. N125 provides a ligand contact to anthranilate. R180 provides a ligand contact to anthranilate. Residues D238 and E239 each contribute to the Mg(2+) site.

Belongs to the anthranilate phosphoribosyltransferase family. Homodimer. The cofactor is Mg(2+).

It catalyses the reaction N-(5-phospho-beta-D-ribosyl)anthranilate + diphosphate = 5-phospho-alpha-D-ribose 1-diphosphate + anthranilate. Its pathway is amino-acid biosynthesis; L-tryptophan biosynthesis; L-tryptophan from chorismate: step 2/5. Catalyzes the transfer of the phosphoribosyl group of 5-phosphorylribose-1-pyrophosphate (PRPP) to anthranilate to yield N-(5'-phosphoribosyl)-anthranilate (PRA). The protein is Anthranilate phosphoribosyltransferase of Streptomyces avermitilis (strain ATCC 31267 / DSM 46492 / JCM 5070 / NBRC 14893 / NCIMB 12804 / NRRL 8165 / MA-4680).